The chain runs to 467 residues: Argininosuccinate lyase (467 aa).

Belongs to the lyase 1 family. Argininosuccinate lyase subfamily.

The protein localises to the cytoplasm. The enzyme catalyses 2-(N(omega)-L-arginino)succinate = fumarate + L-arginine. It participates in amino-acid biosynthesis; L-arginine biosynthesis; L-arginine from L-ornithine and carbamoyl phosphate: step 3/3. This Sinorhizobium fredii (strain NBRC 101917 / NGR234) protein is Argininosuccinate lyase.